The following is a 1036-amino-acid chain: Chitin synthase 1 (1036 aa).

Over residues 1–10 (MDGPPSPTRV) the composition is skewed to pro residues. Positions 1-153 (MDGPPSPTRV…RRPLPPAPLF (153 aa)) are disordered. A glycan (N-linked (GlcNAc...) asparagine) is linked at asparagine 38. Over residues 86 to 108 (PSIPLSSSNPRSPIRPSTPSRVS) the composition is skewed to low complexity. Residue asparagine 179 is glycosylated (N-linked (GlcNAc...) asparagine). Residues 189-229 (RASLKSAHSYTTDSTFTEDDDITNEKLNHYGPAPEGRQDRR) form a disordered region. The segment covering 194–203 (SAHSYTTDST) has biased composition (polar residues). Helical transmembrane passes span 659-679 (FISL…FYFV), 699-719 (IFVI…ILSL), 733-753 (TMVT…YIVI), 776-796 (IFTN…LMSF), 808-828 (SAQY…YAFC), 908-928 (YVVA…SEAY), and 945-967 (WSVA…INIV). The segment at 994–1019 (AGLGSGFSESGKTGITSGSGMSGMSL) is disordered. Low complexity predominate over residues 1001 to 1019 (SESGKTGITSGSGMSGMSL).

Belongs to the chitin synthase family. Class II subfamily.

The protein resides in the cell membrane. It carries out the reaction [(1-&gt;4)-N-acetyl-beta-D-glucosaminyl](n) + UDP-N-acetyl-alpha-D-glucosamine = [(1-&gt;4)-N-acetyl-beta-D-glucosaminyl](n+1) + UDP + H(+). In terms of biological role, polymerizes chitin, a structural polymer of the cell wall and septum, by transferring the sugar moiety of UDP-GlcNAc to the non-reducing end of the growing chitin polymer. CHS1 mainly responsible for normal yeast cell reproductive growth. This Exophiala dermatitidis (strain ATCC 34100 / CBS 525.76 / NIH/UT8656) (Black yeast) protein is Chitin synthase 1.